Consider the following 403-residue polypeptide: UPF0284 protein PMT_1350 (403 aa).

The protein belongs to the UPF0284 family.

This chain is UPF0284 protein PMT_1350, found in Prochlorococcus marinus (strain MIT 9313).